The chain runs to 322 residues: Transcription factor WRKY45-2 (322 aa).

Residues G67–N110 form a disordered region. Residues V112 to P180 constitute a DNA-binding region (WRKY). Positions S256–D284 are disordered.

This sequence belongs to the WRKY group III family. As to expression, expressed in aleurone cells.

The protein localises to the nucleus. In terms of biological role, transcriptional activator involved in defense responses against pathogens. Acts as a positive regulator of defense responses against the rice blast fungus Magnaporthe oryzae. Acts as a positive regulator of defense responses against the bacterial blight Xanthomonas oryzae pv oryzae (Xoo) and the bacterial streak Xanthomonas oryzae pv oryzicola (Xoc). Acts as a positive regulator of abscisic acid (ABA) signaling that suppresses growth of seedlings. Acts as a negative regulator of salt stress response. Acts as a negative regulator of cold stress response. Acts as a negative regulator of drought stress response. The sequence is that of Transcription factor WRKY45-2 from Oryza sativa subsp. indica (Rice).